Here is a 337-residue protein sequence, read N- to C-terminus: MDLDVVNMFVIAGGTLAIPILAFVASFLLWPSALIRIYYWYWRRTLGMQVRYVHHEDYQFCYSFRGRPGHKPSILMLHGFSAHKDMWLSVVKFLPKNLHLVCVDMPGHEGTTRSSLDDLSIDGQVKRIHQFVECLKLNKKPFHLVGTSMGGQVAGVYAAYYPSDVSSLCLVCPAGLQYSTDNQFVQRLKELQGSAAVEKIPLIPSTPEEMSEMLQLCSYVRFKVPQQILQGLVDVRIPHNNFYRKLFLEIVSEKSRYSLHQNMDKIKVPTQIIWGKQDQVLDVSGADMLAKSIANCQVELLENCGHSVVMERPRKTAKLIIDFLASVHNTDNNKKLD.

Over 1–8 (MDLDVVNM) the chain is Extracellular. Residues 9–29 (FVIAGGTLAIPILAFVASFLL) form a helical; Signal-anchor for type II membrane protein membrane-spanning segment. The Cytoplasmic segment spans residues 30–337 (WPSALIRIYY…HNTDNNKKLD (308 aa)). The region spanning 72–313 (PSILMLHGFS…CGHSVVMERP (242 aa)) is the AB hydrolase-1 domain. Residue phenylalanine 80 coordinates (9Z)-octadecenoate. The active-site Nucleophile is the serine 148. Methionine 149 provides a ligand contact to (9Z)-octadecenoate. Residues aspartate 278 and histidine 306 each act as charge relay system in the active site. Histidine 306 provides a ligand contact to (9Z)-octadecenoate.

Belongs to the AB hydrolase superfamily.

It localises to the late endosome membrane. It is found in the lysosome membrane. Its subcellular location is the mitochondrion membrane. It catalyses the reaction Hydrolyzes glycerol monoesters of long-chain fatty acids.. The enzyme catalyses 1-octanoylglycerol + H2O = octanoate + glycerol + H(+). The catalysed reaction is 1-decanoylglycerol + H2O = decanoate + glycerol + H(+). It carries out the reaction 1-dodecanoylglycerol + H2O = dodecanoate + glycerol + H(+). It catalyses the reaction 1-tetradecanoylglycerol + H2O = tetradecanoate + glycerol + H(+). The enzyme catalyses 2-hexadecanoylglycerol + H2O = glycerol + hexadecanoate + H(+). The catalysed reaction is 2-(9Z-octadecenoyl)-glycerol + H2O = glycerol + (9Z)-octadecenoate + H(+). It carries out the reaction 1-(9Z-octadecenoyl)-glycerol + H2O = glycerol + (9Z)-octadecenoate + H(+). It catalyses the reaction 2-(9Z,12Z-octadecadienoyl)-glycerol + H2O = (9Z,12Z)-octadecadienoate + glycerol + H(+). The enzyme catalyses 2-(5Z,8Z,11Z,14Z-eicosatetraenoyl)-glycerol + H2O = glycerol + (5Z,8Z,11Z,14Z)-eicosatetraenoate + H(+). The catalysed reaction is 1-(5Z,8Z,11Z,14Z-eicosatetraenoyl)-glycerol + H2O = glycerol + (5Z,8Z,11Z,14Z)-eicosatetraenoate + H(+). It carries out the reaction 1-(9Z,12Z-octadecadienoyl)-glycerol + H2O = (9Z,12Z)-octadecadienoate + glycerol + H(+). It catalyses the reaction 3-(9Z-octadecenoyl)-sn-glycero-1-phospho-(3'-(9Z-octadecenoyl)-1'-sn-glycerol) + H2O = 3-(9Z-octadecenoyl)-sn-glycero-1-phospho-(1'-sn-glycerol) + (9Z)-octadecenoate + H(+). The enzyme catalyses (S,S)-2-(9Z-octadecenoyl)-sn-glycero-1-phospho-(2'-(9Z-octadecenoyl)-1'-sn-glycerol) + H2O = (S,S)-2-(9Z-octadecenoyl)-sn-glycero-1-phospho-(1'-sn-glycerol) + (9Z)-octadecenoate + H(+). The catalysed reaction is (R,R)-2-(9Z-octadecenoyl)-sn-glycero-3-phospho-(2'-(9Z-octadecenoyl)-3'-sn-glycerol) + H2O = (R,R)-2-(9Z-octadecenoyl)-sn-glycero-3-phospho-(3'-sn-glycerol) + (9Z)-octadecenoate + H(+). Functionally, lipase that preferentially hydrolysis medium-chain saturated monoacylglycerols including 2-arachidonoylglycerol. Through 2-arachidonoylglycerol degradation may regulate endocannabinoid signaling pathways. Also has a lysophosphatidyl lipase activity with a preference for lysophosphatidylglycerol among other lysophospholipids. Also able to degrade bis(monoacylglycero)phosphate (BMP) and constitutes the major enzyme for BMP catabolism. BMP, also known as lysobisphosphatidic acid, is enriched in late endosomes and lysosomes and plays a key role in the formation of intraluminal vesicles and in lipid sorting. This chain is Monoacylglycerol lipase ABHD6, found in Homo sapiens (Human).